The following is a 491-amino-acid chain: Sterol 14-alpha demethylase (491 aa).

A helical membrane pass occupies residues 20 to 40; that stretch reads LWMLSTVALLSILVVSVVINV. C430 is a binding site for heme.

Belongs to the cytochrome P450 family. Requires heme as cofactor.

The protein resides in the endoplasmic reticulum membrane. The catalysed reaction is a 14alpha-methyl steroid + 3 reduced [NADPH--hemoprotein reductase] + 3 O2 = a Delta(14) steroid + formate + 3 oxidized [NADPH--hemoprotein reductase] + 4 H2O + 4 H(+). The enzyme catalyses a 14alpha-methyl steroid + reduced [NADPH--hemoprotein reductase] + O2 = a 14alpha-hydroxymethyl steroid + oxidized [NADPH--hemoprotein reductase] + H2O + H(+). It catalyses the reaction a 14alpha-hydroxymethyl steroid + reduced [NADPH--hemoprotein reductase] + O2 = a 14alpha-formyl steroid + oxidized [NADPH--hemoprotein reductase] + 2 H2O + H(+). It carries out the reaction a 14alpha-formyl steroid + reduced [NADPH--hemoprotein reductase] + O2 = a Delta(14) steroid + formate + oxidized [NADPH--hemoprotein reductase] + H2O + 2 H(+). The catalysed reaction is lanosterol + 3 reduced [NADPH--hemoprotein reductase] + 3 O2 = 4,4-dimethyl-5alpha-cholesta-8,14,24-trien-3beta-ol + formate + 3 oxidized [NADPH--hemoprotein reductase] + 4 H2O + 4 H(+). The enzyme catalyses lanosterol + reduced [NADPH--hemoprotein reductase] + O2 = 32-hydroxylanosterol + oxidized [NADPH--hemoprotein reductase] + H2O + H(+). It catalyses the reaction 32-hydroxylanosterol + reduced [NADPH--hemoprotein reductase] + O2 = 32-oxolanosterol + oxidized [NADPH--hemoprotein reductase] + 2 H2O + H(+). It carries out the reaction 32-oxolanosterol + reduced [NADPH--hemoprotein reductase] + O2 = 4,4-dimethyl-5alpha-cholesta-8,14,24-trien-3beta-ol + formate + oxidized [NADPH--hemoprotein reductase] + H2O + 2 H(+). The catalysed reaction is eburicol + 3 reduced [NADPH--hemoprotein reductase] + 3 O2 = 14-demethyleburicol + formate + 3 oxidized [NADPH--hemoprotein reductase] + 4 H2O + 4 H(+). The enzyme catalyses eburicol + reduced [NADPH--hemoprotein reductase] + O2 = 32-hydroxyeburicol + oxidized [NADPH--hemoprotein reductase] + H2O + H(+). It catalyses the reaction 32-hydroxyeburicol + reduced [NADPH--hemoprotein reductase] + O2 = 32-oxoeburicol + oxidized [NADPH--hemoprotein reductase] + 2 H2O + H(+). It carries out the reaction 32-oxoeburicol + reduced [NADPH--hemoprotein reductase] + O2 = 14-demethyleburicol + formate + oxidized [NADPH--hemoprotein reductase] + H2O + 2 H(+). It functions in the pathway steroid biosynthesis; sterol biosynthesis. Its function is as follows. Sterol 14alpha-demethylase, encoded by cyp51A, cyp51B and cyp51C, that plays a critical role in the third module of ergosterol biosynthesis pathway, being ergosterol the major sterol component in fungal membranes that participates in a variety of functions. The third module or late pathway involves the ergosterol synthesis itself through consecutive reactions that mainly occur in the endoplasmic reticulum (ER) membrane. In filamentous fungi, during the initial step of this module, lanosterol (lanosta-8,24-dien-3beta-ol) can be metabolized to eburicol. Sterol 14alpha-demethylase catalyzes the three-step oxidative removal of the 14alpha-methyl group (C-32) of both these sterols in the form of formate, and converts eburicol and lanosterol to 14-demethyleburicol (4,4,24-trimethylergosta-8,14,24(28)-trienol) and 4,4-dimethyl-5alpha-cholesta-8,14,24-trien-3beta-ol, respectively, which are further metabolized by other enzymes in the pathway to ergosterol. Can also use substrates not intrinsic to fungi, such as 24,25-dihydrolanosterol (DHL), producing 4,4'-dimethyl-8,14-cholestadien-3-beta-ol, but at lower rates than the endogenous substrates. In terms of biological role, as a target of azole drugs, plays a crucial role in azole susceptibility. This is Sterol 14-alpha demethylase from Aspergillus flavus (strain ATCC 200026 / FGSC A1120 / IAM 13836 / NRRL 3357 / JCM 12722 / SRRC 167).